The primary structure comprises 499 residues: Guanosine-5'-triphosphate,3'-diphosphate pyrophosphatase (499 aa).

The protein belongs to the GppA/Ppx family. GppA subfamily.

The catalysed reaction is guanosine 3'-diphosphate 5'-triphosphate + H2O = guanosine 3',5'-bis(diphosphate) + phosphate + H(+). The protein operates within purine metabolism; ppGpp biosynthesis; ppGpp from GTP: step 2/2. Its function is as follows. Catalyzes the conversion of pppGpp to ppGpp. Guanosine pentaphosphate (pppGpp) is a cytoplasmic signaling molecule which together with ppGpp controls the 'stringent response', an adaptive process that allows bacteria to respond to amino acid starvation, resulting in the coordinated regulation of numerous cellular activities. This is Guanosine-5'-triphosphate,3'-diphosphate pyrophosphatase from Klebsiella pneumoniae (strain 342).